Reading from the N-terminus, the 454-residue chain is Transcription factor efuD (454 aa).

The HTH TFE/IIEalpha-type domain occupies 4–111 (AKELIRITAR…NYHRAIDSIK (108 aa)). The tract at residues 327–454 (LRTDDDGAMD…DEDELEFEDI (128 aa)) is disordered. Acidic residues predominate over residues 353–372 (DQDEEEEEEDDDDDEFEDVD). Over residues 387-401 (SVSTPATSAQVSSTA) the composition is skewed to polar residues. A compositionally biased stretch (low complexity) spans 423–437 (APAAAASSQAAAAES). Over residues 442-454 (SDEDEDELEFEDI) the composition is skewed to acidic residues.

This sequence belongs to the TFIIE alpha subunit family.

It is found in the nucleus. Its function is as follows. Transcription factor; part of the gene cluster that mediates the biosynthesis of enfumafungin, a glycosylated fernene-type triterpenoid with potent antifungal activity, mediated by its interaction with beta-1,3-glucan synthase and the fungal cell wall. Is possibly responsible for the transcription regulation of one or more genes within the gene cluster. This is Transcription factor efuD from Hormonema carpetanum.